A 205-amino-acid chain; its full sequence is Protein phosphatase inhibitor 2 (205 aa).

Residues 1–44 form a disordered region; that stretch reads MAASTASHRPIKGILKNKTSTTSSMVASAEQPRGNVDEELSKKS. At Ala2 the chain carries N-acetylalanine. Required for binding PPP1CC regions lie at residues 12-17 and 43-55; these read KGILKN and KSQK…ILAT. A compositionally biased stretch (polar residues) spans 17–26; the sequence is NKTSTTSSMV. A compositionally biased stretch (basic and acidic residues) spans 35 to 44; it reads NVDEELSKKS. At Ser44 the chain carries Phosphoserine; by ATM. Thr73 is subject to Phosphothreonine; by GSK3. Ser87 carries the post-translational modification Phosphoserine. 2 positions are modified to phosphothreonine: Thr89 and Thr92. A disordered region spans residues 111-142; that stretch reads EPKYRIQEQESSGEEDSDLSPEEREKKRQFEM. 4 positions are modified to phosphoserine: Ser121, Ser122, Ser127, and Ser130. A compositionally biased stretch (acidic residues) spans 121 to 130; sequence SSGEEDSDLS. Residues 131–142 are compositionally biased toward basic and acidic residues; it reads PEEREKKRQFEM. The interval 147–150 is required for binding PPP1CC catalytic center, displacing metal ions and inhibition of PPP1CC catalytic activity; that stretch reads HYNE. The tract at residues 163-205 is disordered; sequence KDLHDDDEDEEMLETADGESMNTEESNQGSTPSDQQQNKLRSS. Residues 167–179 show a composition bias toward acidic residues; sequence DDDEDEEMLETAD. The span at 182–205 shows a compositional bias: polar residues; sequence SMNTEESNQGSTPSDQQQNKLRSS.

It belongs to the protein phosphatase inhibitor 2 family. In terms of assembly, heterodimer with PP1. Post-translationally, phosphorylation on Thr-73 by GSK3 activates PP1 by dissociating the PP1-PPP1R2 complex. Phosphorylation on Ser-44 by ATM activates PP1 by dissociating the PP1-PPP1R2 complex.

Inhibitor of protein-phosphatase 1. The chain is Protein phosphatase inhibitor 2 (PPP1R2) from Homo sapiens (Human).